We begin with the raw amino-acid sequence, 413 residues long: uncharacterized protein (413 aa).

It belongs to the mycobacterial PPE family.

This is an uncharacterized protein from Mycobacterium tuberculosis (strain CDC 1551 / Oshkosh).